The following is a 1865-amino-acid chain: Transient receptor potential cation channel subfamily M member 7 (1865 aa).

Residue Met1 is modified to N-acetylmethionine. The Cytoplasmic segment spans residues Met1 to His850. Ser101 is modified (phosphoserine). The span at Asn544–Thr555 shows a compositional bias: low complexity. The interval Asn544–Met575 is disordered. Residues Lys560–Glu573 show a composition bias toward basic and acidic residues. The helical transmembrane segment at Ala851 to Val876 threads the bilayer. Topologically, residues Gln877–Pro882 are extracellular. Residues Ser883 to Ile904 traverse the membrane as a helical segment. Residues Phe905–Tyr923 are Cytoplasmic-facing. A helical transmembrane segment spans residues Phe924 to Phe943. At Gly944 to His956 the chain is on the extracellular side. A helical membrane pass occupies residues Val957–Leu980. Residues Ala981 to Asn999 lie on the Cytoplasmic side of the membrane. A helical transmembrane segment spans residues Met1000–Tyr1023. At Pro1024–His1025 the chain is on the extracellular side. An intramembrane region (pore-forming) is located at residues Glu1026–Cys1066. The Extracellular segment spans residues Gly1067–Gly1069. The chain crosses the membrane as a helical span at residues Thr1070–Asn1098. Topologically, residues Val1099–Leu1865 are cytoplasmic. S-palmitoyl cysteine attachment occurs at residues Cys1143, Cys1144, and Cys1146. Residue Thr1163 is modified to Phosphothreonine; by autocatalysis. Phosphoserine; by autocatalysis occurs at positions 1191 and 1193. The stretch at Arg1198–Thr1250 forms a coiled coil. A Phosphoserine modification is found at Ser1224. 2 positions are modified to phosphoserine; by autocatalysis: Ser1255 and Ser1258. Residue Thr1265 is modified to Phosphothreonine; by autocatalysis. A Phosphoserine; by autocatalysis modification is found at Ser1287. Phosphoserine is present on Ser1301. Ser1358 carries the post-translational modification Phosphoserine; by autocatalysis. Phosphoserine is present on residues Ser1361 and Ser1386. The span at Ser1386–Pro1398 shows a compositional bias: low complexity. Positions Ser1386–Ser1407 are disordered. Phosphoserine; by autocatalysis occurs at positions 1387 and 1390. Phosphoserine occurs at positions 1395 and 1396. Ser1404 bears the Phosphoserine; by autocatalysis mark. The residue at position 1405 (Thr1405) is a Phosphothreonine; by autocatalysis. Ser1407 bears the Phosphoserine; by autocatalysis mark. Thr1435 bears the Phosphothreonine; by autocatalysis mark. Ser1446 is modified (phosphoserine; by autocatalysis). Thr1455 is subject to Phosphothreonine; by autocatalysis. Phosphoserine; by autocatalysis occurs at positions 1456 and 1463. Thr1467 is modified (phosphothreonine). Ser1468 is modified (phosphoserine; by autocatalysis). Thr1471 is modified (phosphothreonine; by autocatalysis). A phosphoserine; by autocatalysis mark is found at Ser1476 and Ser1477. Residue Thr1482 is modified to Phosphothreonine; by autocatalysis. Residues His1492–Val1511 form a disordered region. At Ser1493 the chain carries Phosphoserine; by autocatalysis. Residues Lys1494 to Val1511 show a composition bias toward basic and acidic residues. Ser1500 carries the post-translational modification Phosphoserine. Phosphoserine; by autocatalysis is present on Ser1504. Residue Thr1508 is modified to Phosphothreonine; by autocatalysis. Phosphoserine; by autocatalysis occurs at positions 1513, 1527, and 1533. The disordered stretch occupies residues Asp1524–Ser1543. Phosphothreonine; by autocatalysis occurs at positions 1537 and 1542. At Ser1543 the chain carries Phosphoserine; by autocatalysis. Position 1551 is a phosphothreonine; by autocatalysis (Thr1551). Residues Ser1567 and Ser1569 each carry the phosphoserine; by autocatalysis modification. Thr1583 carries the phosphothreonine; by autocatalysis modification. The Alpha-type protein kinase domain occupies Ile1594 to Leu1824. 2 positions are modified to phosphoserine; by autocatalysis: Ser1598 and Ser1615. ADP contacts are provided by Gly1621, Gly1622, Leu1623, Arg1624, and Lys1648. A Phosphoserine; by autocatalysis modification is found at Ser1660. Thr1685 is subject to Phosphothreonine; by autocatalysis. The ADP site is built by Glu1720, Glu1721, and Met1723. A Zn(2+)-binding site is contributed by His1753. Asp1767 serves as the catalytic Proton acceptor. An ADP-binding site is contributed by Asp1777. At Ser1779 the chain carries Phosphoserine; by autocatalysis. The Zn(2+) site is built by His1810, Cys1812, and Cys1816. Residue Thr1830 is modified to Phosphothreonine; by autocatalysis. Residues Phe1836–Leu1865 form a disordered region. Residues Leu1844–Leu1865 are compositionally biased toward polar residues. Ser1851 bears the Phosphoserine mark. Ser1860 is modified (phosphoserine; by autocatalysis).

The protein in the C-terminal section; belongs to the protein kinase superfamily. Alpha-type protein kinase family. ALPK subfamily. In the N-terminal section; belongs to the transient receptor (TC 1.A.4) family. LTrpC subfamily. TRPM7 sub-subfamily. Homotetramer. Interacts with PLCB1. Forms heteromers with TRPM6; heteromeric channels are functionally different from the homomeric channels. Requires Zn(2+) as cofactor. Palmitoylated; palmitoylation at Cys-1143, Cys-1144 and Cys-1146 promotes TRPM7 trafficking from the Golgi to the surface membrane. In terms of processing, autophosphorylated; autophosphorylation of C-terminus regulates TRPM7 kinase activity towards its substrates. Post-translationally, the C-terminal kinase domain can be cleaved from the channel segment in a cell-type-specific fashion. TRPM7 is cleaved by caspase-8, dissociating the kinase from the ion-conducting pore. The cleaved kinase fragments (M7CKs) can translocate to the cell nucleus and binds chromatin-remodeling complex proteins in a Zn(2+)-dependent manner to ultimately phosphorylate specific Ser/Thr residues of histones.

It localises to the cell membrane. Its subcellular location is the cytoplasmic vesicle membrane. It is found in the nucleus. The catalysed reaction is L-seryl-[protein] + ATP = O-phospho-L-seryl-[protein] + ADP + H(+). It carries out the reaction L-threonyl-[protein] + ATP = O-phospho-L-threonyl-[protein] + ADP + H(+). It catalyses the reaction Mg(2+)(in) = Mg(2+)(out). The enzyme catalyses Ca(2+)(in) = Ca(2+)(out). The catalysed reaction is Zn(2+)(in) = Zn(2+)(out). With respect to regulation, channel displays constitutive activity. Channel activity is negatively regulated by cytosolic Mg(2+) and Mg-ATP. Channel activity is negatively regulated by low intracellular pH. Resting free cytosolic Mg(2+) and Mg-ATP concentrations seem to be sufficient to block native TRPM7 channel activity. TRPM7 channel activity is highly dependent on membrane levels of phosphatidylinositol 4,5 bisphosphate (PIP2). PIP2 hydrolysis negatively regulates TRPM7 channel activity. TRPM7 kinase activity does not affect channel activity. The kinase activity is controlled through the autophosphorylation of a serine/threonine-rich region located N-terminal to the catalytic domain. Functionally, bifunctional protein that combines an ion channel with an intrinsic kinase domain, enabling it to modulate cellular functions either by conducting ions through the pore or by phosphorylating downstream proteins via its kinase domain. The channel is highly permeable to divalent cations, specifically calcium (Ca2+), magnesium (Mg2+) and zinc (Zn2+) and mediates their influx. Controls a wide range of biological processes such as Ca2(+), Mg(2+) and Zn(2+) homeostasis, vesicular Zn(2+) release channel and intracellular Ca(2+) signaling, embryonic development, immune responses, cell motility, proliferation and differentiation. The C-terminal alpha-kinase domain autophosphorylates cytoplasmic residues of TRPM7. In vivo, TRPM7 phosphorylates SMAD2, suggesting that TRPM7 kinase may play a role in activating SMAD signaling pathways. In vitro, TRPM7 kinase phosphorylates ANXA1 (annexin A1), myosin II isoforms and a variety of proteins with diverse cellular functions. In terms of biological role, the cleaved channel exhibits substantially higher current and potentiates Fas receptor signaling. Its function is as follows. The C-terminal kinase domain can be cleaved from the channel segment in a cell-type-specific fashion. In immune cells, the TRPM7 kinase domain is clipped from the channel domain by caspases in response to Fas-receptor stimulation. The cleaved kinase fragments can translocate to the nucleus, and bind chromatin-remodeling complex proteins in a Zn(2+)-dependent manner to ultimately phosphorylate specific Ser/Thr residues of histones known to be functionally important for cell differentiation and embryonic development. This is Transient receptor potential cation channel subfamily M member 7 (TRPM7) from Homo sapiens (Human).